A 546-amino-acid chain; its full sequence is Chaperonin GroEL 4 (546 aa).

ATP is bound by residues 30–33, lysine 51, 87–91, glycine 415, and aspartate 495; these read TLGP and DGTTT. The tract at residues 524–546 is disordered; it reads APKDTPAAGQPGGPGAGGPGLDF. A compositionally biased stretch (gly residues) spans 533–546; it reads QPGGPGAGGPGLDF.

It belongs to the chaperonin (HSP60) family. Forms a cylinder of 14 subunits composed of two heptameric rings stacked back-to-back. Interacts with the co-chaperonin GroES.

It is found in the cytoplasm. It catalyses the reaction ATP + H2O + a folded polypeptide = ADP + phosphate + an unfolded polypeptide.. In terms of biological role, together with its co-chaperonin GroES, plays an essential role in assisting protein folding. The GroEL-GroES system forms a nano-cage that allows encapsulation of the non-native substrate proteins and provides a physical environment optimized to promote and accelerate protein folding. This is Chaperonin GroEL 4 from Paraburkholderia xenovorans (strain LB400).